The primary structure comprises 172 residues: MERAIQGSDVREQADSECWDGGGGGTTSPFKLPDESPSLHEWRLHHSEESENKDNPLGFKESWSFGKVVFKRYLRYDGAETSLHRALGSWERDSVNDAASRFLGLSQIGCTYSIRFRGTRLTLSGGSGTLQRLIEMAIRTKRTMLQPTPSEREGNVSRRRPEGTEAFKEESE.

Composition is skewed to basic and acidic residues over residues 1–14 (MERA…REQA) and 150–172 (SERE…EESE). 2 disordered regions span residues 1–34 (MERA…KLPD) and 145–172 (LQPT…EESE).

This sequence belongs to the tombusvirus protein p19 family. In terms of assembly, homodimer.

Its function is as follows. Viral suppressor of RNA silencing which binds specifically to silencing RNAs (siRNAs). Acts as a molecular caliper to specifically select siRNAs based on the length of the duplex region of the RNA. The chain is RNA silencing suppressor p19 from Cymbidium ringspot virus (CymRSV).